The following is a 921-amino-acid chain: Isoleucine--tRNA ligase (921 aa).

A 'HIGH' region motif is present at residues 59-69 (PYANGHLHIGH). Residue E569 participates in L-isoleucyl-5'-AMP binding. The short motif at 610-614 (KMSKS) is the 'KMSKS' region element. K613 lines the ATP pocket. The Zn(2+) site is built by C896, C899, C911, and C914.

It belongs to the class-I aminoacyl-tRNA synthetase family. IleS type 1 subfamily. Monomer. Zn(2+) serves as cofactor.

It is found in the cytoplasm. The catalysed reaction is tRNA(Ile) + L-isoleucine + ATP = L-isoleucyl-tRNA(Ile) + AMP + diphosphate. Catalyzes the attachment of isoleucine to tRNA(Ile). As IleRS can inadvertently accommodate and process structurally similar amino acids such as valine, to avoid such errors it has two additional distinct tRNA(Ile)-dependent editing activities. One activity is designated as 'pretransfer' editing and involves the hydrolysis of activated Val-AMP. The other activity is designated 'posttransfer' editing and involves deacylation of mischarged Val-tRNA(Ile). The chain is Isoleucine--tRNA ligase from Campylobacter hominis (strain ATCC BAA-381 / DSM 21671 / CCUG 45161 / LMG 19568 / NCTC 13146 / CH001A).